A 1047-amino-acid polypeptide reads, in one-letter code: MVDLQEKQCTIVKRNGMFVPFDRNRIFQALEAAFRDTRRIDDHMPLPEDLENSIRSITHQVVKEVVQKITDGQVVTVERIQDMVESQLYINGLQDVARDYVVYRDDRKAHREKSWQSLSVIRRCGTTVHFNPMKISAALEKAFRATDRIEGMTPDFVREEVNALTQKIVAEIEERCSQQDSRIDIEQIQDIVEQQLMVVGHYATAKNYILYREARARVRDNRVEDQIVEEAPSEETFEVLSKDGSTYMITHSQLLARLARACSRFPETTDAALLTDMAFSNFYSGIKESEVVLACIMAARANIEKEPDYAFVAAELLLDVVYKEALDRSRGDEDLEQVYRDHFKRYIMEGDSYRLNPELKNLFDLDALANAMDLSRDLQFSYMGIQNLYDRYFNHDDGRRLETPQIFWMRVAMGLALKEQDKTYWAITFYNLLSTFRYTPATPTLFNSGMRHSQLSSCYLSTVQDDLVNIYKVISDNAMLSKWAGGIGNDWTAIRATGALIKGTNGKSQGVIPFIKVTNDTAVAVNQGGKRKGAVCVYLEVWHLDYEDFLELRKNTGDDRRRAHDVNTASWIPDLFFKRLQQKGSWTLFSPDDVPGLHDAYGEEFERLYEEYERKVDSGEIRLYKKVEAEDLWRKMLSMLFETGHPWMTFKDPSNIRSAQDHTGVVRCSNLCTEILLNCSETETAVCNLGSVNLVQHILDDGLDEEKLSETISIAVRMLDNVIDINFYPTKEAKEANFAHRAIGLGVMGFQDALYKLDISYASQEAVEFADYSSELISYYAIQASCLLAKERGTYSSYKGSKWDRGLLPIDTIQLLANYRGKDNLQMDTSVRKDWEPIRSLIREHGMRNCQLMAIAPTATISNIIGVTQSIEPTYKHLFVKSNLSGEFTIPNVYLIEKLKKLGIWDADMLDDLKYFDGSLLEIERVPDHIKHIFLTAFEIEPEWILECASRRQKWIDMGQSLNLYLAQPDGKKLSNMYLTAWKKGLKTTYYLRSSSATTVEKSFVDINKRGIQPRWMKNKSASAGIVVERASKTPVCSLEEGCEVCQ.

ATP-cone domains lie at 9-111 (CTIV…KAHR), 118-219 (LSVI…ARVR), and 237-327 (FEVL…EALD). Residues threonine 442, 457-458 (SC), glycine 486, 670-674 (NLCTE), and 857-861 (PTATI) each bind substrate. The cysteines at positions 458 and 687 are disulfide-linked. Residue asparagine 670 is the Proton acceptor of the active site. Cysteine 672 functions as the Cysteine radical intermediate in the catalytic mechanism. Glutamate 674 acts as the Proton acceptor in catalysis.

The protein belongs to the ribonucleoside diphosphate reductase large chain family. Tetramer of two alpha and two beta subunits.

It carries out the reaction a 2'-deoxyribonucleoside 5'-diphosphate + [thioredoxin]-disulfide + H2O = a ribonucleoside 5'-diphosphate + [thioredoxin]-dithiol. Under complex allosteric control mediated by deoxynucleoside triphosphates and ATP binding. The type of nucleotide bound at the specificity site determines substrate preference. It seems probable that ATP makes the enzyme reduce CDP and UDP, dGTP favors ADP reduction and dTTP favors GDP reduction. Functionally, provides the precursors necessary for DNA synthesis. Catalyzes the biosynthesis of deoxyribonucleotides from the corresponding ribonucleotides. This chain is Ribonucleoside-diphosphate reductase subunit alpha (nrdA), found in Chlamydia muridarum (strain MoPn / Nigg).